Reading from the N-terminus, the 545-residue chain is Thermosome subunit beta (545 aa).

The protein belongs to the TCP-1 chaperonin family. Forms a Heterooligomeric complex of two stacked eight-membered rings.

Functionally, molecular chaperone; binds unfolded polypeptides in vitro, and has a weak ATPase activity. The polypeptide is Thermosome subunit beta (thsB) (Archaeoglobus fulgidus (strain ATCC 49558 / DSM 4304 / JCM 9628 / NBRC 100126 / VC-16)).